The sequence spans 430 residues: Adenylosuccinate synthetase (430 aa).

GTP is bound by residues 12 to 18 and 40 to 42; these read GDEGKGK and GHT. Asp-13 functions as the Proton acceptor in the catalytic mechanism. Mg(2+)-binding residues include Asp-13 and Gly-40. IMP is bound by residues 13-16, 38-41, Thr-128, Arg-142, Gln-223, Thr-238, and Arg-302; these read DEGK and NAGH. His-41 (proton donor) is an active-site residue. 298–304 contributes to the substrate binding site; the sequence is TTTGRPR. GTP is bound by residues Arg-304, 330–332, and 412–414; these read LLD and SVG.

This sequence belongs to the adenylosuccinate synthetase family. Homodimer. Mg(2+) serves as cofactor.

The protein localises to the cytoplasm. The catalysed reaction is IMP + L-aspartate + GTP = N(6)-(1,2-dicarboxyethyl)-AMP + GDP + phosphate + 2 H(+). It functions in the pathway purine metabolism; AMP biosynthesis via de novo pathway; AMP from IMP: step 1/2. Functionally, plays an important role in the de novo pathway of purine nucleotide biosynthesis. Catalyzes the first committed step in the biosynthesis of AMP from IMP. The protein is Adenylosuccinate synthetase of Listeria monocytogenes serovar 1/2a (strain ATCC BAA-679 / EGD-e).